Consider the following 594-residue polypeptide: UvrABC system protein C (594 aa).

Residues 14–91 form the GIY-YIG domain; that stretch reads DQPGCYLMKD…IKKHDPKYNI (78 aa). In terms of domain architecture, UVR spans 196–231; that stretch reads KEVRSELETKMYEASEKLEFERAKELRDQIAHIDAI.

This sequence belongs to the UvrC family. Interacts with UvrB in an incision complex.

The protein localises to the cytoplasm. In terms of biological role, the UvrABC repair system catalyzes the recognition and processing of DNA lesions. UvrC both incises the 5' and 3' sides of the lesion. The N-terminal half is responsible for the 3' incision and the C-terminal half is responsible for the 5' incision. This chain is UvrABC system protein C, found in Bacillus cereus (strain AH187).